The following is a 193-amino-acid chain: Xanthine phosphoribosyltransferase (193 aa).

Xanthine contacts are provided by Leu-20 and Thr-27. 128–132 (ANGQA) serves as a coordination point for 5-phospho-alpha-D-ribose 1-diphosphate. Xanthine is bound at residue Lys-156.

Belongs to the purine/pyrimidine phosphoribosyltransferase family. Xpt subfamily. Homodimer.

The protein resides in the cytoplasm. The catalysed reaction is XMP + diphosphate = xanthine + 5-phospho-alpha-D-ribose 1-diphosphate. Its pathway is purine metabolism; XMP biosynthesis via salvage pathway; XMP from xanthine: step 1/1. Converts the preformed base xanthine, a product of nucleic acid breakdown, to xanthosine 5'-monophosphate (XMP), so it can be reused for RNA or DNA synthesis. The protein is Xanthine phosphoribosyltransferase of Streptococcus pneumoniae serotype 4 (strain ATCC BAA-334 / TIGR4).